The primary structure comprises 131 residues: DNA-directed RNA polymerase subunit omega (131 aa).

The disordered stretch occupies residues 78-131 (DEPEAEAVPALSSAPDAAQSDAMGDVQFDRMTEEDLLRGLEGLVPPAATDDDGE). Residues 104–115 (QFDRMTEEDLLR) show a composition bias toward basic and acidic residues.

It belongs to the RNA polymerase subunit omega family. As to quaternary structure, the RNAP catalytic core consists of 2 alpha, 1 beta, 1 beta' and 1 omega subunit. When a sigma factor is associated with the core the holoenzyme is formed, which can initiate transcription.

The enzyme catalyses RNA(n) + a ribonucleoside 5'-triphosphate = RNA(n+1) + diphosphate. Its function is as follows. Promotes RNA polymerase assembly. Latches the N- and C-terminal regions of the beta' subunit thereby facilitating its interaction with the beta and alpha subunits. In Beijerinckia indica subsp. indica (strain ATCC 9039 / DSM 1715 / NCIMB 8712), this protein is DNA-directed RNA polymerase subunit omega.